Consider the following 431-residue polypeptide: Histidine--tRNA ligase (431 aa).

This sequence belongs to the class-II aminoacyl-tRNA synthetase family. As to quaternary structure, homodimer.

The protein resides in the cytoplasm. The catalysed reaction is tRNA(His) + L-histidine + ATP = L-histidyl-tRNA(His) + AMP + diphosphate + H(+). In Neisseria meningitidis serogroup A / serotype 4A (strain DSM 15465 / Z2491), this protein is Histidine--tRNA ligase.